The primary structure comprises 362 residues: Putative F-box protein At3g23260 (362 aa).

Residues 1 to 46 (MEWRSLPVELQEEILSRVPAKYLARLRSTSKQWNALSKTGSFAKKH) enclose the F-box domain.

In Arabidopsis thaliana (Mouse-ear cress), this protein is Putative F-box protein At3g23260.